Reading from the N-terminus, the 306-residue chain is MDQLEERGHLLTEQINPKSRNLDQLTPLELVDLFNQEDAQTLRAIAQARQELAQAIEITAQALGRGGRLFYVGAGTSGRLGVLDAAECPPTFCTHPDLVQGIIAGGAAALVRSSENLEDRPEDGASAIAQRHIIDKDVVVGISAGGTTPFVHGAIEAAKQRGAKTIAMSCVPIEQVPIIVDIDIRLLTGPEILAGSTRLKAGTVTKMALNILSTGVMVCLGKVYGNRMVDVSVTNRKLHDRALRMLQDLTDLSREEAGFLLERSGRKVKLALLMHWTGLDAQMGQELLNNYHGNLRNAVQGYKTNV.

The 164-residue stretch at 59–222 (TAQALGRGGR…STGVMVCLGK (164 aa)) folds into the SIS domain. Residue glutamate 87 is the Proton donor of the active site. Glutamate 118 is an active-site residue.

It belongs to the GCKR-like family. MurNAc-6-P etherase subfamily. Homodimer.

It carries out the reaction N-acetyl-D-muramate 6-phosphate + H2O = N-acetyl-D-glucosamine 6-phosphate + (R)-lactate. Its pathway is amino-sugar metabolism; N-acetylmuramate degradation. In terms of biological role, specifically catalyzes the cleavage of the D-lactyl ether substituent of MurNAc 6-phosphate, producing GlcNAc 6-phosphate and D-lactate. The chain is N-acetylmuramic acid 6-phosphate etherase from Rippkaea orientalis (strain PCC 8801 / RF-1) (Cyanothece sp. (strain PCC 8801)).